Here is a 747-residue protein sequence, read N- to C-terminus: H(+)/Cl(-) exchange transporter 4 (747 aa).

Residues 1-50 (MDFLEEPFPDVGTYEDFHTIDWLREKSRDTDRHRKITSKSKESIWEFIKS) form a required for localization in the endoplasmic reticulum region. At 1–54 (MDFLEEPFPDVGTYEDFHTIDWLREKSRDTDRHRKITSKSKESIWEFIKSLLDA) the chain is on the cytoplasmic side. 2 consecutive transmembrane segments (helical) span residues 55 to 92 (WSGWVVMLLIGLLAGTLAGVIDLAVDWMTDLKEGVCLS) and 138 to 161 (LNYLMYILWALLFAFLAVSLVRVF). The Selectivity filter part_1 signature appears at 167 to 171 (GSGIP). Position 168 (serine 168) interacts with chloride. Residues 170-177 (IPEIKTIL) constitute an intramembrane region (helical). The next 2 helical transmembrane spans lie at 187–205 (GKWTLLIKTVTLVLVVSSG) and 211–230 (EGPLVHVACCCGNFFSSLFS). The Selectivity filter part_2 signature appears at 209–213 (GKEGP). 2 intramembrane regions (helical) span residues 242–254 (VLSAAAAAGVSVA) and 258–266 (PIGGVLFSL). 5 consecutive transmembrane segments (helical) span residues 278-296 (LWRSFFAALVAAFTLRSIN), 320-345 (FPFILLGVFGGLWGTLFTRCNIAWCR), 352-372 (LGRYPVLEVIAVTAVTAIVAY), 429-449 (MWQLALALIFKIVITIFTFGM), and 454-473 (GLFIPSMAVGAMAGRMVGIG). A Selectivity filter part_3 motif is present at residues 454-458 (GLFIP). Chloride is bound at residue phenylalanine 456. 2 consecutive intramembrane regions (helical) follow at residues 501-515 (GLYAMVGAAACLGGV) and 519-530 (TVSLVVIMFELT). Residues 531 to 534 (GGLE) constitute an intramembrane region (note=Loop between two helices). The chain crosses the membrane as a helical span at residues 535–553 (YIVPLMAAAVTSKWVADAF). Residues 554–747 (GKEGIYEAHI…NQDPESIMFN (194 aa)) are Cytoplasmic-facing. Tyrosine 559 is a chloride binding site. 2 consecutive CBS domains span residues 587–653 (MRPR…QRQE) and 680–742 (LRRI…QDPE). ATP is bound by residues serine 597 and 618–620 (YNG). Positions 654 to 683 (GIVSNSIMYFTEEPPELPANSPHPLKLRRI) are required for localization in the endoplasmic reticulum. 725–728 (TKKD) serves as a coordination point for ATP.

This sequence belongs to the chloride channel (TC 2.A.49) family. ClC-4/CLCN4 subfamily. In terms of tissue distribution, predominantly present in excitable tissues such as nervous system and skeletal muscle. Not detected in heart.

Its subcellular location is the early endosome membrane. It is found in the late endosome membrane. The protein localises to the endoplasmic reticulum membrane. The protein resides in the lysosome membrane. It localises to the recycling endosome membrane. Its function is as follows. Strongly outwardly rectifying, electrogenic H(+)/Cl(-)exchanger which mediates the exchange of chloride ions against protons. The CLC channel family contains both chloride channels and proton-coupled anion transporters that exchange chloride or another anion for protons. The presence of conserved gating glutamate residues is typical for family members that function as antiporters. The polypeptide is H(+)/Cl(-) exchange transporter 4 (Clcn4) (Mus musculus (Mouse)).